A 226-amino-acid polypeptide reads, in one-letter code: Phosphoglycolate phosphatase (226 aa).

D9 functions as the Nucleophile in the catalytic mechanism. D9 and D11 together coordinate Mg(2+). K150 contacts substrate. Mg(2+)-binding residues include D173 and D177.

The protein belongs to the archaeal SPP-like hydrolase family. The cofactor is Mg(2+).

It carries out the reaction 2-phosphoglycolate + H2O = glycolate + phosphate. Catalyzes the dephosphorylation of 2-phosphoglycolate. The polypeptide is Phosphoglycolate phosphatase (Methanococcoides burtonii (strain DSM 6242 / NBRC 107633 / OCM 468 / ACE-M)).